A 262-amino-acid polypeptide reads, in one-letter code: Hydroxyethylthiazole kinase (262 aa).

Met-41 is a binding site for substrate. Residues Arg-117 and Ser-163 each coordinate ATP. Gly-190 serves as a coordination point for substrate.

It belongs to the Thz kinase family. It depends on Mg(2+) as a cofactor.

The enzyme catalyses 5-(2-hydroxyethyl)-4-methylthiazole + ATP = 4-methyl-5-(2-phosphooxyethyl)-thiazole + ADP + H(+). The protein operates within cofactor biosynthesis; thiamine diphosphate biosynthesis; 4-methyl-5-(2-phosphoethyl)-thiazole from 5-(2-hydroxyethyl)-4-methylthiazole: step 1/1. Its function is as follows. Catalyzes the phosphorylation of the hydroxyl group of 4-methyl-5-beta-hydroxyethylthiazole (THZ). This chain is Hydroxyethylthiazole kinase, found in Levilactobacillus brevis (strain ATCC 367 / BCRC 12310 / CIP 105137 / JCM 1170 / LMG 11437 / NCIMB 947 / NCTC 947) (Lactobacillus brevis).